Here is a 73-residue protein sequence, read N- to C-terminus: Somatostatin-2 (73 aa).

Residues 1 to 45 (SAGLLTQEWSAVEDLLAQMSLPEADAQRDAEMVSTATGGGRMNQE) constitute a propeptide that is removed on maturation. The segment at 23-58 (EADAQRDAEMVSTATGGGRMNQESIEPPNNLPPRER) is disordered. Cys62 and Cys73 are disulfide-bonded.

This sequence belongs to the somatostatin family.

The protein resides in the secreted. Its function is as follows. Somatostatin inhibits the release of somatotropin. This is Somatostatin-2 (sst2) from Platichthys flesus (European flounder).